Here is a 1040-residue protein sequence, read N- to C-terminus: Multidrug resistance protein MdtB (1040 aa).

Helical transmembrane passes span 25 to 45, 347 to 367, 369 to 389, 396 to 416, 440 to 460, 472 to 492, 537 to 557, 863 to 883, 888 to 908, 910 to 930, 968 to 988, and 998 to 1018; these read LLMAAILLAGIIGYRFLPVAA, LMLAIALVVMIIYLFLRNIPA, IIPGVAVPLSLIGTFAVMVFL, LTLMALTIATGFVVDDAIVVI, IGFTIISLTFSLIAVLIPLLF, FAVTLAVAILISAVVSLTLTP, WLTLSVAFATLLLSVMLWIVI, LGSTVWLIVAAVVAMYIVLGV, FIHPITILSTLPTAGVGALLA, IIAGSELDIIAIIGIILLIGI, ILMTTLAALLGALPLMLSTGV, and IAMVGGLLVSQVLTLFTTPVI.

This sequence belongs to the resistance-nodulation-cell division (RND) (TC 2.A.6) family. MdtB subfamily. As to quaternary structure, part of a tripartite efflux system composed of MdtA, MdtB and MdtC. MdtB forms a heteromultimer with MdtC.

The protein localises to the cell inner membrane. This is Multidrug resistance protein MdtB from Salmonella gallinarum (strain 287/91 / NCTC 13346).